Reading from the N-terminus, the 358-residue chain is Metacaspase-3 (358 aa).

The segment at 1–84 is important for catalytic activity; sequence MGFDFGCLLK…APTHVSGTFR (84 aa). Catalysis depends on residues H168 and C223.

The protein belongs to the peptidase C14B family. Post-translationally, in epimastigotes, the unprocessed enzyme appears to be the main form. Auto-processing is dispensable for catalytic activity towards small oligopeptide substrates.

It is found in the cytoplasm. Its subcellular location is the nucleus. With respect to regulation, activated by Ca(2+). Its function is as follows. Cysteine protease that cleaves specifically after arginine or lysine residues. In epimastigotes, may play a role in cell cycle G1/S transition. The chain is Metacaspase-3 from Trypanosoma cruzi (strain CL Brener).